Reading from the N-terminus, the 222-residue chain is Deoxyribose-phosphate aldolase (222 aa).

The active-site Proton donor/acceptor is Asp94. Lys156 (schiff-base intermediate with acetaldehyde) is an active-site residue. The Proton donor/acceptor role is filled by Lys185.

It belongs to the DeoC/FbaB aldolase family. DeoC type 1 subfamily.

Its subcellular location is the cytoplasm. The catalysed reaction is 2-deoxy-D-ribose 5-phosphate = D-glyceraldehyde 3-phosphate + acetaldehyde. Its pathway is carbohydrate degradation; 2-deoxy-D-ribose 1-phosphate degradation; D-glyceraldehyde 3-phosphate and acetaldehyde from 2-deoxy-alpha-D-ribose 1-phosphate: step 2/2. In terms of biological role, catalyzes a reversible aldol reaction between acetaldehyde and D-glyceraldehyde 3-phosphate to generate 2-deoxy-D-ribose 5-phosphate. In Malacoplasma penetrans (strain HF-2) (Mycoplasma penetrans), this protein is Deoxyribose-phosphate aldolase.